Here is a 510-residue protein sequence, read N- to C-terminus: Histidine ammonia-lyase (510 aa).

The segment at residues A144 to G146 is a cross-link (5-imidazolinone (Ala-Gly)). 2,3-didehydroalanine (Ser) is present on S145.

It belongs to the PAL/histidase family. Contains an active site 4-methylidene-imidazol-5-one (MIO), which is formed autocatalytically by cyclization and dehydration of residues Ala-Ser-Gly.

It localises to the cytoplasm. It carries out the reaction L-histidine = trans-urocanate + NH4(+). Its pathway is amino-acid degradation; L-histidine degradation into L-glutamate; N-formimidoyl-L-glutamate from L-histidine: step 1/3. The polypeptide is Histidine ammonia-lyase (Chromobacterium violaceum (strain ATCC 12472 / DSM 30191 / JCM 1249 / CCUG 213 / NBRC 12614 / NCIMB 9131 / NCTC 9757 / MK)).